A 63-amino-acid polypeptide reads, in one-letter code: Kurtoxin-like II (63 aa).

The LCN-type CS-alpha/beta domain occupies isoleucine 2–arginine 62. 4 disulfide bridges follow: cysteine 12–cysteine 61, cysteine 16–cysteine 37, cysteine 23–cysteine 44, and cysteine 27–cysteine 46.

This sequence belongs to the long (4 C-C) scorpion toxin superfamily. Sodium channel inhibitor family. Alpha subfamily. In terms of tissue distribution, expressed by the venom gland.

Its subcellular location is the secreted. Its function is as follows. This neurotoxin acts on sodium and calcium channels. Potently inhibits native voltage-gated T-type calcium channel activity in mouse male germ cells. Also binds Cav3.1/CACNA1G, Cav3.2/CACNA1H, and Cav3.3/CACNA1I T-type calcium channels and inhibits the channels by modifying voltage-dependent gating. In addition, binds and significantly inhibits the inactivation of activated sodium channels (Nav1.2/SCN2A and Nav1.5/SCN5A). The sequence is that of Kurtoxin-like II from Parabuthus granulatus (Granulated thick-tailed scorpion).